A 271-amino-acid chain; its full sequence is Inactive phospholipid phosphatase 7 (271 aa).

Residues 1–69 form a disordered region; it reads MPVSQSRARA…RQSQQLPEED (69 aa). Residues 1 to 112 are Cytoplasmic-facing; it reads MPVSQSRARA…AASWASARSM (112 aa). The span at 24–36 shows a compositional bias: polar residues; sequence SLNQPPKGTQEPR. A phosphoserine mark is found at Ser-43 and Ser-62. Positions 70-91 are interaction with MTOR; that stretch reads CMQLNPSFKGIAFNSLLAIDIC. A helical membrane pass occupies residues 113 to 133; that stretch reads VKLIGITSHGIPWIGGTILCL. The Extracellular portion of the chain corresponds to 134-141; it reads VRSSTLAG. The chain crosses the membrane as a helical span at residues 142-162; sequence QEVLMNLLLALLLDIMTVAGV. Residues 163–202 are Cytoplasmic-facing; it reads QKLIKRRGPYETSPGLLDYLTMDIYAFPAGHASRAAMVSK. Residues 203–223 form a helical membrane-spanning segment; the sequence is FFLSHLVLAVPLRVLLVLWAF. Over 224 to 239 the chain is Extracellular; it reads CVGLSRVMIGRHHITD. Residues 240-260 traverse the membrane as a helical segment; it reads VISGFIIGYFQFRLVELVWMS. Residues 261-271 are Cytoplasmic-facing; sequence SNTCQMLISAW.

Belongs to the PA-phosphatase related phosphoesterase family. In terms of assembly, homo- and heterooligomer. Interacts with MTOR; controls MTOR-dependent IGF2 expression during myoblast differentiation.

It localises to the nucleus envelope. Its subcellular location is the endoplasmic reticulum membrane. It is found in the membrane. In terms of biological role, plays a role as negative regulator of myoblast differentiation, in part through effects on MTOR signaling. Has no detectable enzymatic activity. In Rattus norvegicus (Rat), this protein is Inactive phospholipid phosphatase 7.